Reading from the N-terminus, the 204-residue chain is Ribosomal RNA large subunit methyltransferase E (204 aa).

The S-adenosyl-L-methionine site is built by glycine 49, tryptophan 51, aspartate 69, asparagine 87, and aspartate 111. Lysine 151 serves as the catalytic Proton acceptor.

Belongs to the class I-like SAM-binding methyltransferase superfamily. RNA methyltransferase RlmE family.

Its subcellular location is the cytoplasm. The enzyme catalyses uridine(2552) in 23S rRNA + S-adenosyl-L-methionine = 2'-O-methyluridine(2552) in 23S rRNA + S-adenosyl-L-homocysteine + H(+). Functionally, specifically methylates the uridine in position 2552 of 23S rRNA at the 2'-O position of the ribose in the fully assembled 50S ribosomal subunit. In Nitratidesulfovibrio vulgaris (strain ATCC 29579 / DSM 644 / CCUG 34227 / NCIMB 8303 / VKM B-1760 / Hildenborough) (Desulfovibrio vulgaris), this protein is Ribosomal RNA large subunit methyltransferase E.